Here is a 1410-residue protein sequence, read N- to C-terminus: Pogo transposable element with ZNF domain (1410 aa).

A disordered region spans residues 238 to 291; that stretch reads RSTVPQSQSQQTKSTPSTSTTPTATQPTSLGQLAVQSPGQSNQTTNPKLAPSFP. Residues 239-266 are compositionally biased toward low complexity; that stretch reads STVPQSQSQQTKSTPSTSTTPTATQPTS. Positions 267 to 284 are enriched in polar residues; the sequence is LGQLAVQSPGQSNQTTNP. Lysine 319 participates in a covalent cross-link: Glycyl lysine isopeptide (Lys-Gly) (interchain with G-Cter in SUMO2). The disordered stretch occupies residues 332-361; the sequence is QSPGPVVVSNNSSAHGSQRTSGPESSMKVT. Phosphoserine is present on serine 333. Positions 345–361 are enriched in polar residues; it reads AHGSQRTSGPESSMKVT. Residue lysine 359 forms a Glycyl lysine isopeptide (Lys-Gly) (interchain with G-Cter in SUMO2) linkage. Position 363 is a phosphoserine (serine 363). The C2H2-type 1; atypical zinc-finger motif lies at 375–397; that stretch reads KICPRCNAQFRVTEALRGHMCYC. Residues 409–456 form a disordered region; it reads KSLDSEPSVPSAAKPPSPEKTAPVASTPSSTPIPALSPPTKVPEPNEN. Lysine 422 participates in a covalent cross-link: Glycyl lysine isopeptide (Lys-Gly) (interchain with G-Cter in SUMO2). Serine 425 bears the Phosphoserine mark. Position 439 is a phosphothreonine (threonine 439). Serine 445 bears the Phosphoserine mark. A Glycyl lysine isopeptide (Lys-Gly) (interchain with G-Cter in SUMO2) cross-link involves residue lysine 449. A Phosphothreonine modification is found at threonine 463. Lysine 489 is covalently cross-linked (Glycyl lysine isopeptide (Lys-Gly) (interchain with G-Cter in SUMO2)). C2H2-type zinc fingers lie at residues 494-516, 530-553, 560-583, 590-613, 619-641, and 647-670; these read FRCP…MKHH, TICQ…ENVH, TKCK…KDTH, YVCQ…RMIH, LLCP…YMRH, and YHCN…LQHH. Lysine 629 participates in a covalent cross-link: Glycyl lysine isopeptide (Lys-Gly) (interchain with G-Cter in SUMO2). Lysine 677 participates in a covalent cross-link: Glycyl lysine isopeptide (Lys-Gly) (interchain with G-Cter in SUMO2). Positions 693 to 715 are disordered; sequence SRGQPRTVPVSSNDTPPSALQEA. Over residues 701–710 the composition is skewed to polar residues; sequence PVSSNDTPPS. The segment at 771–794 adopts a C2H2-type 8 zinc-finger fold; the sequence is VHCSLCRYSTCCSRAYANHMINNH. Residue lysine 801 forms a Glycyl lysine isopeptide (Lys-Gly) (interchain with G-Cter in SUMO2) linkage. Positions 810–850 are required for interaction with CBX5; sequence VSGIKLACTSCTFVTSVGDAMAKHLVFNPSHRSSSILPRGL. Residues 815-840 form a C2H2-type 9 zinc finger; that stretch reads LACTSCTFVTSVGDAMAKHLVFNPSH. At serine 856 the chain carries Phosphoserine. 2 disordered regions span residues 857-927 and 942-969; these read RHGQ…PQAL and VDDQ…GVGK. Positions 860-870 are enriched in basic and acidic residues; sequence QTRDRVHDRNV. A Glycyl lysine isopeptide (Lys-Gly) (interchain with G-Cter in SUMO2) cross-link involves residue lysine 883. A compositionally biased stretch (low complexity) spans 892-915; it reads ATPAEPEELLTPLAPALPSPASTA. An HTH CENPB-type domain is found at 1015 to 1085; it reads GENLEGKYLS…MLRHHLTPHA (71 aa). In terms of domain architecture, DDE-1 spans 1117-1323; it reads LPLSMIVAID…DCPELVQRSF (207 aa). A Phosphoserine modification is found at serine 1338. Residues 1340-1360 adopt a coiled-coil conformation; the sequence is TRNADMQEELIASLEEQLKLS. The segment at 1360 to 1400 is disordered; that stretch reads SGEHSESSTPRPRSSPEETIEPESLHQLFEGESETESFYGF. Residues serine 1364 and serine 1367 each carry the phosphoserine modification. Phosphothreonine is present on threonine 1368. Serine 1373 and serine 1374 each carry phosphoserine. Threonine 1378 carries the post-translational modification Phosphothreonine. Residues 1380–1404 carry the Integrase domain-binding motif (IBM) motif; that stretch reads EPESLHQLFEGESETESFYGFEEAD. A Phosphoserine; by CK2 modification is found at serine 1392. A Phosphothreonine modification is found at threonine 1394. At serine 1396 the chain carries Phosphoserine; by CK2.

Interacts with CBX1, CBX3, MAD2L2 and CHAMP1. Interacts with CBX5; POGZ competes with PXVXL motif-containing proteins such as INCENP and TRIM28 for interaction with CBX5. Interacts (via IBM motif) with PSIP1 isoform 1 (via IBD domain); phosphorylation increases its affinity for PSIP1. Interacts with HDGFL2. In terms of processing, phosphorylation increases its interaction with PSIP1.

It localises to the nucleus. The protein resides in the chromosome. The protein localises to the cytoplasm. Its function is as follows. Plays a role in mitotic cell cycle progression and is involved in kinetochore assembly and mitotic sister chromatid cohesion. Probably through its association with CBX5 plays a role in mitotic chromosome segregation by regulating aurora kinase B/AURKB activation and AURKB and CBX5 dissociation from chromosome arms. Promotes the repair of DNA double-strand breaks through the homologous recombination pathway. In Homo sapiens (Human), this protein is Pogo transposable element with ZNF domain (POGZ).